A 415-amino-acid chain; its full sequence is Protein PIN-LIKES 4 (415 aa).

Topologically, residues 1–13 (MKLLELFIASSKP) are lumenal. A helical transmembrane segment spans residues 14 to 34 (VVETLLITSVGFYLALDTVNL). Residues 35-44 (LGHDARKHLN) are Cytoplasmic-facing. Residues 45-61 (NIVFYVFSPSLIGSRLA) form a helical membrane-spanning segment. At 62–75 (DSVTYESLVKMWFM) the chain is on the lumenal side. A helical transmembrane segment spans residues 76-96 (PVNVLLTFMIGSLLGWIVIVI). Residues 97–106 (TKPPSQLRGL) lie on the Cytoplasmic side of the membrane. A helical transmembrane segment spans residues 107-127 (IISCCASGNLGTMPLIIIPAI). Topologically, residues 128–143 (CKEKGGPFGDSESCEK) are lumenal. A helical transmembrane segment spans residues 144–161 (YGMGYVTLSMTAFFISVY). Residues 162–244 (KHDTNWYVSG…RVVSLSKKVN (83 aa)) are Cytoplasmic-facing. A helical transmembrane segment spans residues 245 to 265 (LGSIFAPATIAAIIALVIGLI). Residues 266-285 (TPLRNLIIGTVAPFRVIQDS) are Lumenal-facing. A helical transmembrane segment spans residues 286 to 306 (LTLLGDGAIPAMTLILGGNLL). Residues 307-322 (KGMRRSEVRSSEMKNS) are Cytoplasmic-facing. Residues 323-343 (CIIGVLVARYILLPVSGVLLV) traverse the membrane as a helical segment. The Lumenal portion of the chain corresponds to 344 to 355 (RGAYKLDLVTSE). Residues 356-376 (PLYQFVLLLQYAVPPAMNLGT) traverse the membrane as a helical segment. The Cytoplasmic segment spans residues 377–389 (KTQLFGAGESECS). The chain crosses the membrane as a helical span at residues 390-410 (VIMLWTYSLAAVSLTVWPTFF). Residues 411–415 (MWLVT) lie on the Lumenal side of the membrane.

This sequence belongs to the auxin efflux carrier (TC 2.A.69.2) family. In terms of tissue distribution, expressed in seedlings, rosette and cauline leaves, stems, flowers and siliques.

The protein localises to the endoplasmic reticulum membrane. Functionally, involved in cellular auxin homeostasis by regulating auxin metabolism. Regulates intracellular auxin accumulation at the endoplasmic reticulum and thus auxin availability for nuclear auxin signaling. In Arabidopsis thaliana (Mouse-ear cress), this protein is Protein PIN-LIKES 4.